Consider the following 714-residue polypeptide: Polyribonucleotide nucleotidyltransferase (714 aa).

Mg(2+) contacts are provided by D489 and D495. A KH domain is found at 556 to 615 (PKIDTIKIDVDKIKVVIGKGGETIDKIIAETGVKIDIDEEGNVSIYSSDQDAINRAKEII). One can recognise an S1 motif domain in the interval 625 to 693 (GEVYHAKVVR…DKGRIDASMK (69 aa)). Positions 691–714 (SMKALVPRPPKPEKSEAKKEGKHD) are disordered. A compositionally biased stretch (basic and acidic residues) spans 700-714 (PKPEKSEAKKEGKHD).

It belongs to the polyribonucleotide nucleotidyltransferase family. Mg(2+) serves as cofactor.

Its subcellular location is the cytoplasm. The enzyme catalyses RNA(n+1) + phosphate = RNA(n) + a ribonucleoside 5'-diphosphate. Functionally, involved in mRNA degradation. Catalyzes the phosphorolysis of single-stranded polyribonucleotides processively in the 3'- to 5'-direction. This chain is Polyribonucleotide nucleotidyltransferase, found in Streptococcus equi subsp. zooepidemicus (strain MGCS10565).